The following is a 327-amino-acid chain: MAKPIRVLLYYKYVPIENAEQFAADHLAFCKSIGLKGRILVADEGINGTVSGDYETTQKYMDYVHSLPGMEDLWFKIDEEEEQAFKKMFVRYKKEIVHLGLEDNNFDSDINPLETTGAYLSPKEFKDALLDEDTVVLDTRNDYEYDLGHFRGAIRPDIRNFRELPQWVRDHKEEFMDKRVVVYCTGGVRCEKFSGWLVREGYKDVGQLHGGIVTYGKDPEVQGELWDGKLYVFDERIAVDVNHVDPIVVGKDWFDGTPCERYVNCGNPFCNRRILTSEENEDKYLRGCSHECRVHPRNRYVSENDLSQEEVVSRLAAIGESLDVTPA.

The region spanning 130 to 224 is the Rhodanese domain; the sequence is LDEDTVVLDT…YGKDPEVQGE (95 aa). Catalysis depends on C184, which acts as the Cysteine persulfide intermediate.

The protein belongs to the TrhO family.

The enzyme catalyses uridine(34) in tRNA + AH2 + O2 = 5-hydroxyuridine(34) in tRNA + A + H2O. In terms of biological role, catalyzes oxygen-dependent 5-hydroxyuridine (ho5U) modification at position 34 in tRNAs. In Streptococcus thermophilus (strain ATCC BAA-491 / LMD-9), this protein is tRNA uridine(34) hydroxylase.